A 352-amino-acid polypeptide reads, in one-letter code: UDP-3-O-acylglucosamine N-acyltransferase (352 aa).

The active-site Proton acceptor is the His-244.

Belongs to the transferase hexapeptide repeat family. LpxD subfamily. In terms of assembly, homotrimer.

The enzyme catalyses a UDP-3-O-[(3R)-3-hydroxyacyl]-alpha-D-glucosamine + a (3R)-hydroxyacyl-[ACP] = a UDP-2-N,3-O-bis[(3R)-3-hydroxyacyl]-alpha-D-glucosamine + holo-[ACP] + H(+). The protein operates within bacterial outer membrane biogenesis; LPS lipid A biosynthesis. In terms of biological role, catalyzes the N-acylation of UDP-3-O-acylglucosamine using 3-hydroxyacyl-ACP as the acyl donor. Is involved in the biosynthesis of lipid A, a phosphorylated glycolipid that anchors the lipopolysaccharide to the outer membrane of the cell. The protein is UDP-3-O-acylglucosamine N-acyltransferase of Leptospira biflexa serovar Patoc (strain Patoc 1 / Ames).